The chain runs to 479 residues: Probable polyamine transporter At3g19553 (479 aa).

A run of 12 helical transmembrane segments spans residues 22–42, 53–73, 86–106, 130–150, 160–180, 236–256, 275–295, 304–324, 332–352, 355–375, 395–415, and 420–440; these read LTLLPLVFLIFYEVSGGPFGV, LLALLGFLIFPLIWSIPEALV, GYVVWISSAFGPFWGFQEGFW, FPVLDHVAARVPALLVITFSL, IVGFSAVVLAVFSLCPFVVMA, ALFGAVLLVMGSYLIPLMAGT, VGMLIGGVWLKGWIQAAAAMS, MSSDAFQLLGMSEIGMLPAFF, TPTISILCSATGVIFLSWMSF, IIEFLNFLYALGMLLEFAAFV, FGVSMLCLPPSLLVILVMVLA, and FLISGVIIVLGFCLYPFLTLV. The disordered stretch occupies residues 454 to 479; it reads RPVSGVSSESQLDEEHGDESAASLLP.

The protein belongs to the amino acid-polyamine-organocation (APC) superfamily. Polyamine:cation symporter (PHS) (TC 2.A.3.12) family.

It is found in the cell membrane. Functionally, probable cell membrane polyamine/proton symporter involved in the polyamine uptake in cells. The chain is Probable polyamine transporter At3g19553 from Arabidopsis thaliana (Mouse-ear cress).